Here is a 102-residue protein sequence, read N- to C-terminus: Type IV secretion system protein PtlA homolog (102 aa).

Residues 1-31 form the signal peptide; it reads MNRLKDLGTPRPRLAFMAACILLLATLPDFA. Transmembrane regions (helical) follow at residues 45 to 65 and 77 to 97; these read AGIV…AIIW and VLDV…AEIA.

The protein belongs to the PtlA family.

It is found in the cell membrane. This chain is Type IV secretion system protein PtlA homolog (ptlA), found in Bordetella bronchiseptica (strain ATCC BAA-588 / NCTC 13252 / RB50) (Alcaligenes bronchisepticus).